Reading from the N-terminus, the 486-residue chain is Protein hold'em (486 aa).

The OB DNA-binding region spans 166–285 (IITTNVNLLV…DCRLLLAFAA (120 aa)).

This sequence belongs to the MEIOB family. In terms of assembly, interacts with mei-9 and Ercc1.

In terms of biological role, single-stranded DNA-binding protein required for meiosis. May be involved in the resolution of recombination intermediates into crossovers in the meiotic recombination pathway. In Drosophila melanogaster (Fruit fly), this protein is Protein hold'em (hdm).